The primary structure comprises 836 residues: Mediator of RNA polymerase II transcription subunit 25 (836 aa).

Disordered regions lie at residues isoleucine 260–valine 285, glycine 435–asparagine 466, valine 518–glycine 547, and glutamine 731–glycine 836. 2 stretches are compositionally biased toward polar residues: residues serine 271–proline 282 and serine 442–asparagine 466. Residues asparagine 680–histidine 761 adopt a coiled-coil conformation. Composition is skewed to low complexity over residues glutamine 731–serine 818 and proline 827–glycine 836.

This sequence belongs to the Mediator complex subunit 25 family. In terms of assembly, component of the Mediator complex. Interacts with the transcription factors BBX20, RAP2-2, ERF1B, ERF091, ERF095, ERF098, ERF109, HB29, PHL1, DREB2A, ABI5 and MYC2. Interacts with the E3 ubiquitin-protein ligases MBR1 and MBR2.

The protein localises to the nucleus. Component of the Mediator complex, a coactivator involved in the regulated transcription of nearly all RNA polymerase II-dependent genes. Mediator functions as a bridge to convey information from gene-specific regulatory proteins to the basal RNA polymerase II transcription machinery. Mediator is recruited to promoters by direct interactions with regulatory proteins and serves as a scaffold for the assembly of a functional preinitiation complex with RNA polymerase II and the general transcription factors. Positive regulator of shade avoidance and of jasmonate signaling. Acts in repression of PhyB-mediated light signaling and regulates the expression of FLOWERING LOCUS T (FT) and of CONSTANS (CO). The protein is Mediator of RNA polymerase II transcription subunit 25 (MED25) of Arabidopsis thaliana (Mouse-ear cress).